The following is a 929-amino-acid chain: Isoleucine--tRNA ligase (929 aa).

The 'HIGH' region signature appears at Pro-58–His-68. Glu-563 is an L-isoleucyl-5'-AMP binding site. The short motif at Lys-605–Ser-609 is the 'KMSKS' region element. An ATP-binding site is contributed by Lys-608. Cys-892, Cys-895, Cys-912, and Cys-915 together coordinate Zn(2+).

The protein belongs to the class-I aminoacyl-tRNA synthetase family. IleS type 1 subfamily. Monomer. It depends on Zn(2+) as a cofactor.

It localises to the cytoplasm. It carries out the reaction tRNA(Ile) + L-isoleucine + ATP = L-isoleucyl-tRNA(Ile) + AMP + diphosphate. In terms of biological role, catalyzes the attachment of isoleucine to tRNA(Ile). As IleRS can inadvertently accommodate and process structurally similar amino acids such as valine, to avoid such errors it has two additional distinct tRNA(Ile)-dependent editing activities. One activity is designated as 'pretransfer' editing and involves the hydrolysis of activated Val-AMP. The other activity is designated 'posttransfer' editing and involves deacylation of mischarged Val-tRNA(Ile). This Neisseria meningitidis serogroup B (strain ATCC BAA-335 / MC58) protein is Isoleucine--tRNA ligase.